A 483-amino-acid polypeptide reads, in one-letter code: Probable cytochrome P450 517A4 (483 aa).

Residues 1–21 (MEIVNVLLFLIILFLVKDFVK) form a helical membrane-spanning segment. C429 lines the heme pocket.

It belongs to the cytochrome P450 family. Heme serves as cofactor.

The protein localises to the membrane. In Dictyostelium discoideum (Social amoeba), this protein is Probable cytochrome P450 517A4 (cyp517A4).